We begin with the raw amino-acid sequence, 146 residues long: Large ribosomal subunit protein uL15 (146 aa).

The disordered stretch occupies residues 1–56 (MGLRLNELSPGVGAKKTAQRRGRGIGSGLGKTGGRGVKGQKSRSGSSVRSGFEGGQ). A compositionally biased stretch (gly residues) spans 24–37 (GIGSGLGKTGGRGV).

It belongs to the universal ribosomal protein uL15 family. In terms of assembly, part of the 50S ribosomal subunit.

Its function is as follows. Binds to the 23S rRNA. The chain is Large ribosomal subunit protein uL15 from Psychrobacter arcticus (strain DSM 17307 / VKM B-2377 / 273-4).